Reading from the N-terminus, the 905-residue chain is MSKENINLPKTAFSMKANLQNKEPEILEYWKKIDLYKELRKSNKGKEKFILHDGPPYANGNIHMGTALNKILKDIIVKFHQMDGKDSVYVPGWDCHGLPIEWKIEEQYKKNKKNKNEVPITEFRKECREFAEKWIEVHKTQFKRLGVVGDWENHYATMSFEAEAQIVRELGKFLKEGSLYRGFKPVLWSTVEKTALADAEVEYQDHKSDTIYTAFPVKKTNIKELENTDVIIWTTTPWTIPANKALAYNEALDYLIIELGDEGDFKNKKIVVAEALLESVIKDCEIKSYKEIKKFKGKDFKDTICSHPFLELGYDYDIPMLEARFVTTEQGTGIVHCAPSHGPDDFNLCLKYGIKAIETVDGDGKYTKNLPLFEGTHIFKANPIVIEKLKEQKKLLSNGELVHSYPHSWRSKAPLVHRATPQWFISMESHGLRKKALKALDDTKFYPDKGRERIKAMIETRPDWCVSRQRVWGVPLPIFVHKTTKEILVDDNVNENIASIYEKEGSDCWFSDSPQRFLGDKYKAEDYEKISDIVEVWFDSGCTHAFVLEKREDLQWPASMYLEGSDQHRGWFHSSLLESCGTRGRAPYESILSHGFVVDGKGLKMSKSVGNVIAPEDILKKYGADILRIWVASSNYAEDLRIDYSILEQHADSYRKIRNTFRYLLGNLNDDFQKIDLESLDIKQLPELERYMLHRVYELNNNFKNYFKSYDFHNLYKELLNFCTVDLSSFYFDIRKDALYCDSKNSDRRKSSIVVLNIILESLVKWFAPILSFTTEEIFTLINKEQKSIHLEQFMKYPESFQDEELHKKWIELKKIRDICNISIEAKRASKEIGSSLEASLIINLNKSLFEISKNVDFSEICITSSALVHQSNTDEIIIKTIKAEGNKCPVCWKINKVKCERHSD.

The 'HIGH' region motif lies at 56 to 66 (PYANGNIHMGT). Glu-563 serves as a coordination point for L-isoleucyl-5'-AMP. Residues 604–608 (KMSKS) carry the 'KMSKS' region motif. Lys-607 contributes to the ATP binding site.

Belongs to the class-I aminoacyl-tRNA synthetase family. IleS type 1 subfamily. As to quaternary structure, monomer.

The protein resides in the cytoplasm. It carries out the reaction tRNA(Ile) + L-isoleucine + ATP = L-isoleucyl-tRNA(Ile) + AMP + diphosphate. Its function is as follows. Catalyzes the attachment of isoleucine to tRNA(Ile). As IleRS can inadvertently accommodate and process structurally similar amino acids such as valine, to avoid such errors it has two additional distinct tRNA(Ile)-dependent editing activities. One activity is designated as 'pretransfer' editing and involves the hydrolysis of activated Val-AMP. The other activity is designated 'posttransfer' editing and involves deacylation of mischarged Val-tRNA(Ile). The sequence is that of Isoleucine--tRNA ligase from Pelagibacter ubique (strain HTCC1062).